The primary structure comprises 320 residues: Tyrosine recombinase Synpcc7942_B2651 (320 aa).

In terms of domain architecture, Core-binding (CB) spans 16 to 106 (VQDWDVLQML…ALKSLVRFSR (91 aa)). Positions 127–313 (RDTTGTTPER…RQDFQGECTE (187 aa)) constitute a Tyr recombinase domain. Residues Arg-167, Lys-193, His-264, Arg-267, and His-291 contribute to the active site. Tyr-300 (O-(3'-phospho-DNA)-tyrosine intermediate) is an active-site residue.

The protein belongs to the 'phage' integrase family.

The protein localises to the cytoplasm. In terms of biological role, site-specific tyrosine recombinase, which acts by catalyzing the cutting and rejoining of the recombining DNA molecules. In Synechococcus elongatus (strain ATCC 33912 / PCC 7942 / FACHB-805) (Anacystis nidulans R2), this protein is Tyrosine recombinase Synpcc7942_B2651.